The following is a 251-amino-acid chain: D-aminoacyl-tRNA deacylase (251 aa).

It belongs to the DtdA deacylase family. In terms of assembly, monomer. Zn(2+) is required as a cofactor.

It carries out the reaction a D-aminoacyl-tRNA + H2O = a tRNA + a D-alpha-amino acid + H(+). The catalysed reaction is glycyl-tRNA(Ala) + H2O = tRNA(Ala) + glycine + H(+). D-aminoacyl-tRNA deacylase with broad substrate specificity. By recycling D-aminoacyl-tRNA to D-amino acids and free tRNA molecules, this enzyme counteracts the toxicity associated with the formation of D-aminoacyl-tRNA entities in vivo. The sequence is that of D-aminoacyl-tRNA deacylase from Pyrobaculum calidifontis (strain DSM 21063 / JCM 11548 / VA1).